We begin with the raw amino-acid sequence, 359 residues long: Agropine synthesis conjugase (359 aa).

The region spanning 28–171 (TVAKFGRATA…IGGILNEREN (144 aa)) is the SIS domain.

This chain is Agropine synthesis conjugase (mas2), found in Rhizobium rhizogenes (Agrobacterium rhizogenes).